An 86-amino-acid chain; its full sequence is Large ribosomal subunit protein bL27 (86 aa).

Residues methionine 1–threonine 10 are compositionally biased toward gly residues. The tract at residues methionine 1–leucine 21 is disordered.

The protein belongs to the bacterial ribosomal protein bL27 family.

This is Large ribosomal subunit protein bL27 from Ralstonia nicotianae (strain ATCC BAA-1114 / GMI1000) (Ralstonia solanacearum).